A 202-amino-acid polypeptide reads, in one-letter code: Holliday junction resolvase RecU (202 aa).

Mg(2+)-binding residues include Thr85, Asp87, Glu100, and Gln119.

The protein belongs to the RecU family. It depends on Mg(2+) as a cofactor.

It is found in the cytoplasm. The catalysed reaction is Endonucleolytic cleavage at a junction such as a reciprocal single-stranded crossover between two homologous DNA duplexes (Holliday junction).. Functionally, endonuclease that resolves Holliday junction intermediates in genetic recombination. Cleaves mobile four-strand junctions by introducing symmetrical nicks in paired strands. Promotes annealing of linear ssDNA with homologous dsDNA. Required for DNA repair, homologous recombination and chromosome segregation. This chain is Holliday junction resolvase RecU, found in Streptococcus equi subsp. zooepidemicus (strain H70).